A 364-amino-acid chain; its full sequence is Flavonoid 3'-O-methyltransferase 3 (364 aa).

S-adenosyl-L-methionine is bound at residue Asp-232. Residue His-270 is the Proton acceptor of the active site.

It belongs to the class I-like SAM-binding methyltransferase superfamily. Cation-independent O-methyltransferase family. As to quaternary structure, homodimer.

It carries out the reaction quercetin + S-adenosyl-L-methionine = isorhamnetin + S-adenosyl-L-homocysteine + H(+). It catalyses the reaction luteolin + S-adenosyl-L-methionine = chrysoeriol + S-adenosyl-L-homocysteine + H(+). The enzyme catalyses a 3'-hydroxyflavone + S-adenosyl-L-methionine = a 3'-methoxyflavone + S-adenosyl-L-homocysteine + H(+). The catalysed reaction is rhamnetin + S-adenosyl-L-methionine = rhamnacene + S-adenosyl-L-homocysteine + H(+). It carries out the reaction 3',4',7,8-tetrahydroxyflavone + S-adenosyl-L-methionine = 4',7,8-trihydroxy-3'-methoxyflavone-7-olate + S-adenosyl-L-homocysteine + H(+). It catalyses the reaction taxifolin + S-adenosyl-L-methionine = taxifolin 3'-methyl ether + S-adenosyl-L-homocysteine + H(+). Its pathway is flavonoid metabolism. In terms of biological role, flavonoid 3'-O-methyltransferase involved in the biosynthesis of polymethoxylated flavonoids natural products such as pebrellin, aroma compounds which contribute to the flavor of peppermint, and exhibit pharmacological activities such as anti-allergic, anti-oxidant, antibacterial, anti-proliferative, and anti-inflammatory effects. Catalyzes S-adenosylmethionine-dependent regioselective 3'-O-methylation of flavonoids; active on various hydroxylated flavonoid substrates, including quercetin, rhamnetin, luteolin (LUT), 7,8,3'4'-tetrahydroxy-flavone and taxifolin, and, with a lower efficiency, eupatorin and hesperetin. This is Flavonoid 3'-O-methyltransferase 3 from Mentha piperita (Peppermint).